The sequence spans 512 residues: Maturase K (512 aa).

This sequence belongs to the intron maturase 2 family. MatK subfamily.

It localises to the plastid. Its subcellular location is the chloroplast. Functionally, usually encoded in the trnK tRNA gene intron. Probably assists in splicing its own and other chloroplast group II introns. This Oenothera biennis (German evening primrose) protein is Maturase K.